Reading from the N-terminus, the 149-residue chain is Arginine repressor (149 aa).

It belongs to the ArgR family.

Its subcellular location is the cytoplasm. It functions in the pathway amino-acid biosynthesis; L-arginine biosynthesis [regulation]. Its function is as follows. Regulates arginine biosynthesis genes. The sequence is that of Arginine repressor from Shouchella clausii (strain KSM-K16) (Alkalihalobacillus clausii).